We begin with the raw amino-acid sequence, 66 residues long: uncharacterized protein (66 aa).

2 helical membrane passes run 4-24 and 38-58; these read ALFI…LLIF and LLTP…ILVL.

It localises to the membrane. This is an uncharacterized protein from Saccharomyces cerevisiae (strain ATCC 204508 / S288c) (Baker's yeast).